The following is a 134-amino-acid chain: UPF0412 protein YaaI (134 aa).

Residues 1-23 form the signal peptide; that stretch reads MKSVITISASLAISLMLCCTAQA.

It belongs to the UPF0412 family.

This is UPF0412 protein YaaI from Escherichia coli O127:H6 (strain E2348/69 / EPEC).